Here is a 100-residue protein sequence, read N- to C-terminus: Urease subunit gamma (100 aa).

This sequence belongs to the urease gamma subunit family. As to quaternary structure, heterotrimer of UreA (gamma), UreB (beta) and UreC (alpha) subunits. Three heterotrimers associate to form the active enzyme.

The protein localises to the cytoplasm. It catalyses the reaction urea + 2 H2O + H(+) = hydrogencarbonate + 2 NH4(+). The protein operates within nitrogen metabolism; urea degradation; CO(2) and NH(3) from urea (urease route): step 1/1. The protein is Urease subunit gamma of Marinomonas sp. (strain MWYL1).